A 151-amino-acid chain; its full sequence is Large ribosomal subunit protein bL9 (151 aa).

It belongs to the bacterial ribosomal protein bL9 family.

In terms of biological role, binds to the 23S rRNA. This Lactobacillus delbrueckii subsp. bulgaricus (strain ATCC 11842 / DSM 20081 / BCRC 10696 / JCM 1002 / NBRC 13953 / NCIMB 11778 / NCTC 12712 / WDCM 00102 / Lb 14) protein is Large ribosomal subunit protein bL9.